Reading from the N-terminus, the 1400-residue chain is DNA-directed RNA polymerase subunit beta' (1400 aa).

Positions 71, 73, 86, and 89 each coordinate Zn(2+). Mg(2+)-binding residues include D462, D464, and D466. Zn(2+) contacts are provided by C811, C885, C892, and C895.

It belongs to the RNA polymerase beta' chain family. As to quaternary structure, the RNAP catalytic core consists of 2 alpha, 1 beta, 1 beta' and 1 omega subunit. When a sigma factor is associated with the core the holoenzyme is formed, which can initiate transcription. Requires Mg(2+) as cofactor. The cofactor is Zn(2+).

It catalyses the reaction RNA(n) + a ribonucleoside 5'-triphosphate = RNA(n+1) + diphosphate. Functionally, DNA-dependent RNA polymerase catalyzes the transcription of DNA into RNA using the four ribonucleoside triphosphates as substrates. The polypeptide is DNA-directed RNA polymerase subunit beta' (Brucella ovis (strain ATCC 25840 / 63/290 / NCTC 10512)).